The primary structure comprises 759 residues: ARF GTPase-activating protein GIT2 (759 aa).

An Arf-GAP domain is found at 1–124 (MSKRLRSNDV…AFVHRLPCRD (124 aa)). A C4-type zinc finger spans residues 11-34 (CADCSGPDPSWASVNRGTLICDEC). ANK repeat units lie at residues 132–161 (DLSKQLHSSVRTGNLETCLRLLSLGAQANF), 166–198 (KGSTPLHVASKAGQILQAELLAVYGADPGTHDS), and 199–228 (SGKTPVDYARQGGHRELAERLVEIQYELTD). Disordered regions lie at residues 376–422 (VSNQ…DLSD) and 469–641 (QSEN…PSTE). Residues 385-402 (QDNDQPDYDSVASDEDTD) show a composition bias toward acidic residues. A coiled-coil region spans residues 451 to 478 (NNNLSGELRIMQKKLQTLQSENSSLRRQ). The span at 469–489 (QSENSSLRRQATASACQVQTA) shows a compositional bias: polar residues. Residues 555–569 (TSSSSLPSFPSTLSW) show a composition bias toward low complexity. A compositionally biased stretch (basic and acidic residues) spans 570-583 (SRDESTRRASRLEK).

In terms of assembly, may form heterooligomers with GIT1. Directly interacts with protein Piccolo/PCLO. Interacts with PPFIA1 and PPFIA2. Interacts with ARHGEF7. Identified in a complex with ARHGEF6 and BIN2. Interacts with PAK3. Interacts with PXN/paxillin. Interacts with TGFB1I1. Forms a complex with EFNB1 and GRB4/NCK2.

In terms of biological role, GTPase-activating protein for ADP ribosylation factor family members, including ARF1. The polypeptide is ARF GTPase-activating protein GIT2 (Git2) (Rattus norvegicus (Rat)).